The primary structure comprises 651 residues: Acetyl-coenzyme A synthetase (651 aa).

Residues 190 to 193 (RGGR), threonine 309, and asparagine 333 contribute to the CoA site. Residues 385–387 (GEP), 409–414 (DTWWQT), aspartate 498, and arginine 513 contribute to the ATP site. Serine 521 is a CoA binding site. Arginine 524 contacts ATP. Residues valine 535, histidine 537, and valine 540 each coordinate Mg(2+). Arginine 582 contacts CoA. Lysine 607 carries the N6-acetyllysine modification.

The protein belongs to the ATP-dependent AMP-binding enzyme family. The cofactor is Mg(2+). Acetylated. Deacetylation by the SIR2-homolog deacetylase activates the enzyme.

It carries out the reaction acetate + ATP + CoA = acetyl-CoA + AMP + diphosphate. In terms of biological role, catalyzes the conversion of acetate into acetyl-CoA (AcCoA), an essential intermediate at the junction of anabolic and catabolic pathways. AcsA undergoes a two-step reaction. In the first half reaction, AcsA combines acetate with ATP to form acetyl-adenylate (AcAMP) intermediate. In the second half reaction, it can then transfer the acetyl group from AcAMP to the sulfhydryl group of CoA, forming the product AcCoA. The chain is Acetyl-coenzyme A synthetase from Xanthobacter autotrophicus (strain ATCC BAA-1158 / Py2).